A 365-amino-acid polypeptide reads, in one-letter code: Mitogen-activated protein kinase 13 (365 aa).

The region spanning 25–308 (YVSPTHVGSG…AAQALTHPFF (284 aa)) is the Protein kinase domain. Residue 31-39 (VGSGAYGSV) participates in ATP binding. Position 47 is a phosphoserine (Ser-47). ATP is bound at residue Lys-54. Asp-150 functions as the Proton acceptor in the catalytic mechanism. Position 180 is a phosphothreonine; by MAP2K3, MAP2K4, MAP2K6 and MAP2K7 (Thr-180). A TXY motif is present at residues 180 to 182 (TGY). Tyr-182 carries the post-translational modification Phosphotyrosine; by MAP2K3, MAP2K4, MAP2K6 and MAP2K7. Position 350 is a phosphoserine (Ser-350).

It belongs to the protein kinase superfamily. CMGC Ser/Thr protein kinase family. MAP kinase subfamily. As to quaternary structure, interacts with MAPK8IP2. Requires Mg(2+) as cofactor. Post-translationally, dually phosphorylated on Thr-180 and Tyr-182 by MAP2K3/MKK3, MAP2K4/MKK4, MAP2K6/MKK6 and MAP2K7/MKK7, which activates the enzyme. Dephosphorylated by dual specificity phosphatase DUSP1.

It carries out the reaction L-seryl-[protein] + ATP = O-phospho-L-seryl-[protein] + ADP + H(+). The catalysed reaction is L-threonyl-[protein] + ATP = O-phospho-L-threonyl-[protein] + ADP + H(+). With respect to regulation, activated by phosphorylation on threonine and tyrosine by dual specificity kinases, MAP2K3/MKK3, MAP2K6/MKK6, MAP2K4/MKK4 and MAP2K7/MKK7. Activation by ultraviolet radiation, hyperosmotic shock, anisomycin or by TNF-alpha is mediated by MAP2K3/MKK3. Inhibited by dual specificity phosphatase DUSP1. In terms of biological role, serine/threonine kinase which acts as an essential component of the MAP kinase signal transduction pathway. MAPK13 is one of the four p38 MAPKs which play an important role in the cascades of cellular responses evoked by extracellular stimuli such as pro-inflammatory cytokines or physical stress leading to direct activation of transcription factors such as ELK1 and ATF2. Accordingly, p38 MAPKs phosphorylate a broad range of proteins and it has been estimated that they may have approximately 200 to 300 substrates each. MAPK13 is one of the less studied p38 MAPK isoforms. Some of the targets are downstream kinases such as MAPKAPK2, which are activated through phosphorylation and further phosphorylate additional targets. Plays a role in the regulation of protein translation by phosphorylating and inactivating EEF2K. Involved in cytoskeletal remodeling through phosphorylation of MAPT and STMN1. Mediates UV irradiation induced up-regulation of the gene expression of CXCL14. Plays an important role in the regulation of epidermal keratinocyte differentiation, apoptosis and skin tumor development. Phosphorylates the transcriptional activator MYB in response to stress which leads to rapid MYB degradation via a proteasome-dependent pathway. MAPK13 also phosphorylates and down-regulates PRKD1 during regulation of insulin secretion in pancreatic beta cells. This chain is Mitogen-activated protein kinase 13 (MAPK13), found in Pan troglodytes (Chimpanzee).